The primary structure comprises 345 residues: Holliday junction branch migration complex subunit RuvB (345 aa).

The large ATPase domain (RuvB-L) stretch occupies residues 3-187 (LDILQNRNNL…FGFTARLDFY (185 aa)). ATP contacts are provided by residues Leu-26, Arg-27, Gly-68, Lys-71, Thr-72, Thr-73, 134-136 (EDF), Arg-177, Tyr-187, and Arg-224. Position 72 (Thr-72) interacts with Mg(2+). The small ATPAse domain (RuvB-S) stretch occupies residues 188–259 (SPEELLQVLI…IALKAMDVYE (72 aa)). Residues 262–345 (SLGLDRLDRA…EDLSGFELYL (84 aa)) are head domain (RuvB-H). DNA contacts are provided by Arg-317 and Arg-322.

The protein belongs to the RuvB family. As to quaternary structure, homohexamer. Forms an RuvA(8)-RuvB(12)-Holliday junction (HJ) complex. HJ DNA is sandwiched between 2 RuvA tetramers; dsDNA enters through RuvA and exits via RuvB. An RuvB hexamer assembles on each DNA strand where it exits the tetramer. Each RuvB hexamer is contacted by two RuvA subunits (via domain III) on 2 adjacent RuvB subunits; this complex drives branch migration. In the full resolvosome a probable DNA-RuvA(4)-RuvB(12)-RuvC(2) complex forms which resolves the HJ.

Its subcellular location is the cytoplasm. It catalyses the reaction ATP + H2O = ADP + phosphate + H(+). The RuvA-RuvB-RuvC complex processes Holliday junction (HJ) DNA during genetic recombination and DNA repair, while the RuvA-RuvB complex plays an important role in the rescue of blocked DNA replication forks via replication fork reversal (RFR). RuvA specifically binds to HJ cruciform DNA, conferring on it an open structure. The RuvB hexamer acts as an ATP-dependent pump, pulling dsDNA into and through the RuvAB complex. RuvB forms 2 homohexamers on either side of HJ DNA bound by 1 or 2 RuvA tetramers; 4 subunits per hexamer contact DNA at a time. Coordinated motions by a converter formed by DNA-disengaged RuvB subunits stimulates ATP hydrolysis and nucleotide exchange. Immobilization of the converter enables RuvB to convert the ATP-contained energy into a lever motion, pulling 2 nucleotides of DNA out of the RuvA tetramer per ATP hydrolyzed, thus driving DNA branch migration. The RuvB motors rotate together with the DNA substrate, which together with the progressing nucleotide cycle form the mechanistic basis for DNA recombination by continuous HJ branch migration. Branch migration allows RuvC to scan DNA until it finds its consensus sequence, where it cleaves and resolves cruciform DNA. The protein is Holliday junction branch migration complex subunit RuvB of Tropheryma whipplei (strain TW08/27) (Whipple's bacillus).